The sequence spans 290 residues: Phosphatidylglycerol--prolipoprotein diacylglyceryl transferase (290 aa).

A run of 7 helical transmembrane segments spans residues 21–41, 60–80, 96–116, 124–144, 199–219, 226–246, and 259–279; these read VSLH…MWLA, LLYA…VLFY, WDGG…MLWF, FFQV…AGRL, SQLY…NLFI, GSVS…VECF, and VISM…IMMI. Arg-143 lines the a 1,2-diacyl-sn-glycero-3-phospho-(1'-sn-glycerol) pocket.

Belongs to the Lgt family.

It is found in the cell inner membrane. The catalysed reaction is L-cysteinyl-[prolipoprotein] + a 1,2-diacyl-sn-glycero-3-phospho-(1'-sn-glycerol) = an S-1,2-diacyl-sn-glyceryl-L-cysteinyl-[prolipoprotein] + sn-glycerol 1-phosphate + H(+). It participates in protein modification; lipoprotein biosynthesis (diacylglyceryl transfer). In terms of biological role, catalyzes the transfer of the diacylglyceryl group from phosphatidylglycerol to the sulfhydryl group of the N-terminal cysteine of a prolipoprotein, the first step in the formation of mature lipoproteins. This chain is Phosphatidylglycerol--prolipoprotein diacylglyceryl transferase, found in Yersinia enterocolitica serotype O:8 / biotype 1B (strain NCTC 13174 / 8081).